The sequence spans 74 residues: ATP synthase subunit c (74 aa).

A run of 2 helical transmembrane segments spans residues 8–28 (FIGI…VSNI) and 52–72 (IGAG…MLLI).

This sequence belongs to the ATPase C chain family. As to quaternary structure, F-type ATPases have 2 components, F(1) - the catalytic core - and F(0) - the membrane proton channel. F(1) has five subunits: alpha(3), beta(3), gamma(1), delta(1), epsilon(1). F(0) has three main subunits: a(1), b(2) and c(10-14). The alpha and beta chains form an alternating ring which encloses part of the gamma chain. F(1) is attached to F(0) by a central stalk formed by the gamma and epsilon chains, while a peripheral stalk is formed by the delta and b chains.

It is found in the cell inner membrane. In terms of biological role, f(1)F(0) ATP synthase produces ATP from ADP in the presence of a proton or sodium gradient. F-type ATPases consist of two structural domains, F(1) containing the extramembraneous catalytic core and F(0) containing the membrane proton channel, linked together by a central stalk and a peripheral stalk. During catalysis, ATP synthesis in the catalytic domain of F(1) is coupled via a rotary mechanism of the central stalk subunits to proton translocation. Functionally, key component of the F(0) channel; it plays a direct role in translocation across the membrane. A homomeric c-ring of between 10-14 subunits forms the central stalk rotor element with the F(1) delta and epsilon subunits. The chain is ATP synthase subunit c from Rickettsia prowazekii (strain Madrid E).